The sequence spans 146 residues: D-aminoacyl-tRNA deacylase (146 aa).

The short motif at 137–138 is the Gly-cisPro motif, important for rejection of L-amino acids element; that stretch reads GP.

Belongs to the DTD family. Homodimer.

It is found in the cytoplasm. It catalyses the reaction glycyl-tRNA(Ala) + H2O = tRNA(Ala) + glycine + H(+). It carries out the reaction a D-aminoacyl-tRNA + H2O = a tRNA + a D-alpha-amino acid + H(+). In terms of biological role, an aminoacyl-tRNA editing enzyme that deacylates mischarged D-aminoacyl-tRNAs. Also deacylates mischarged glycyl-tRNA(Ala), protecting cells against glycine mischarging by AlaRS. Acts via tRNA-based rather than protein-based catalysis; rejects L-amino acids rather than detecting D-amino acids in the active site. By recycling D-aminoacyl-tRNA to D-amino acids and free tRNA molecules, this enzyme counteracts the toxicity associated with the formation of D-aminoacyl-tRNA entities in vivo and helps enforce protein L-homochirality. The sequence is that of D-aminoacyl-tRNA deacylase from Bacillus cytotoxicus (strain DSM 22905 / CIP 110041 / 391-98 / NVH 391-98).